The chain runs to 470 residues: Dihydrolipoyl dehydrogenase (470 aa).

FAD is bound by residues 39–47, lysine 56, and alanine 119; that span reads EKATLGGVC. A disulfide bridge connects residues cysteine 47 and cysteine 52. Residues 183-187, glutamate 206, and 272-275 contribute to the NAD(+) site; these read GGGYI and TVGR. Residues aspartate 315 and alanine 323 each coordinate FAD. The Proton acceptor role is filled by histidine 447.

The protein belongs to the class-I pyridine nucleotide-disulfide oxidoreductase family. In terms of assembly, homodimer. Component of two multienzyme complexes: pyruvate dehydrogenase complex and oxoglutarate dehydrogenase complex. Requires FAD as cofactor.

It localises to the cytoplasm. It catalyses the reaction N(6)-[(R)-dihydrolipoyl]-L-lysyl-[protein] + NAD(+) = N(6)-[(R)-lipoyl]-L-lysyl-[protein] + NADH + H(+). Its function is as follows. Catalyzes the oxidation of dihydrolipoamide to lipoamide. The protein is Dihydrolipoyl dehydrogenase (pdhD) of Bacillus subtilis (strain 168).